The following is a 922-amino-acid chain: Up-regulator of cell proliferation (922 aa).

A disordered region spans residues 1-20 (MASSGHSDLGEVTSEIKASE). Phosphoserine is present on Ser-3. One can recognise a VLIG-type G domain in the interval 680–920 (RSRLVVLSAL…NIQQLIELVR (241 aa)).

It belongs to the TRAFAC class dynamin-like GTPase superfamily. Very large inducible GTPase (VLIG) family.

It localises to the cytoplasm. The protein localises to the nucleus. Its function is as follows. May be involved in cell cycle progression through the regulation of cyclin D1 expression. This is Up-regulator of cell proliferation (URGCP) from Bos taurus (Bovine).